The sequence spans 425 residues: Enolase (425 aa).

Gln162 lines the (2R)-2-phosphoglycerate pocket. Glu204 functions as the Proton donor in the catalytic mechanism. Mg(2+) is bound by residues Asp241, Glu284, and Asp311. (2R)-2-phosphoglycerate-binding residues include Lys336, Arg365, Ser366, and Lys387. Residue Lys336 is the Proton acceptor of the active site.

The protein belongs to the enolase family. Mg(2+) serves as cofactor.

The protein resides in the cytoplasm. It localises to the secreted. Its subcellular location is the cell surface. The enzyme catalyses (2R)-2-phosphoglycerate = phosphoenolpyruvate + H2O. It participates in carbohydrate degradation; glycolysis; pyruvate from D-glyceraldehyde 3-phosphate: step 4/5. Catalyzes the reversible conversion of 2-phosphoglycerate (2-PG) into phosphoenolpyruvate (PEP). It is essential for the degradation of carbohydrates via glycolysis. This Brucella melitensis biotype 2 (strain ATCC 23457) protein is Enolase.